A 116-amino-acid chain; its full sequence is MTNKELQAIRKLLMLDVSEAAEHIGRVSARSWQYWESGRSAVPDDVEQEMLDLASVRIEMMSAIDKRLADGERPKLRFYNKLDEYLADNPDHNVIGWRLSQSVAALYYTEGHADLI.

Tyr34 is a binding site for DNA. Residue His92 participates in Mg(2+) binding.

As to quaternary structure, homodimer.

Its function is as follows. Represses the expression of the acrIF8-aca2 operon. Regulates the transcription and translation of phage anti-CRISPR acrIF8 gene (AC H9C181), which is necessary because the expression of this gene rises rapidely upon infection to enable evasion from host CRISPR-Cas defense but is probably toxic to the host cell. Aca2 repressor can inhibit acrIF8 transcriptionally through DNA binding to 2 inverted repeats in the promoter region and translationally by binding conserved RNA stem-loops on mRNAs thereby blocking ribosome access. Both modes of regulation together are essential for complete tight repression. The protein is Aca2 repressor of Pectobacterium carotovorum (Erwinia carotovora).